We begin with the raw amino-acid sequence, 760 residues long: Prolyl endopeptidase FAP (760 aa).

Residues M1 to W4 are Cytoplasmic-facing. Residues V5–V25 traverse the membrane as a helical; Signal-anchor for type II membrane protein segment. Topologically, residues L26 to D760 are extracellular. N49, N92, and N99 each carry an N-linked (GlcNAc...) asparagine glycan. Substrate is bound by residues E203 and E204. 2 N-linked (GlcNAc...) asparagine glycosylation sites follow: N227 and N314. Disulfide bonds link C321/C332, C438/C441, and C448/C466. Catalysis depends on S624, which acts as the Charge relay system. A disulfide bond links C643 and C755. The N-linked (GlcNAc...) asparagine glycan is linked to N679. Residues D702 and H734 each act as charge relay system in the active site.

It belongs to the peptidase S9B family. In terms of assembly, homodimer; homodimerization is required for activity of both plasma membrane and soluble forms. The monomer is inactive. Heterodimer with DPP4. Interacts with PLAUR; the interaction occurs at the cell surface of invadopodia membranes. Interacts with ITGB1. Interacts with ITGA3. Associates with integrin alpha-3/beta-1; the association occurs in a collagen-dependent manner at the cell surface of invadopodia membranes. In terms of processing, N-glycosylated. Post-translationally, the N-terminus may be blocked. In terms of tissue distribution, expressed in adipose tissue. Expressed in the dermal fibroblasts in the fetal skin. Expressed in the granulation tissue of healing wounds and on reactive stromal fibroblast in epithelial cancers. Expressed in activated fibroblast-like synoviocytes from inflamed synovial tissues. Expressed in activated hepatic stellate cells (HSC) and myofibroblasts from cirrhotic liver, but not detected in normal liver. Expressed in glioma cells (at protein level). Expressed in glioblastomas and glioma cells. Isoform 1 and isoform 2 are expressed in melanoma, carcinoma and fibroblast cell lines.

It is found in the cell surface. Its subcellular location is the cell membrane. The protein resides in the cell projection. The protein localises to the lamellipodium membrane. It localises to the invadopodium membrane. It is found in the ruffle membrane. Its subcellular location is the membrane. The protein resides in the secreted. The protein localises to the cytoplasm. The enzyme catalyses Hydrolysis of Pro-|-Xaa &gt;&gt; Ala-|-Xaa in oligopeptides.. The catalysed reaction is Release of an N-terminal dipeptide, Xaa-Yaa-|-Zaa-, from a polypeptide, preferentially when Yaa is Pro, provided Zaa is neither Pro nor hydroxyproline.. With respect to regulation, gelatinase activity is inhibited by serine-protease inhibitors, such as phenylmethylsulfonyl fluoride (PMSF), 4-(2-aminoethyl)-benzenesulfonyl fluoride hydrochloride (AEBSF), 4-amidino phenylsulfonyl fluoride (APSF) and diisopropyl fluorophosphate (DFP), N-ethylmaleimide (NEM) and phenylmethylsulfonyl fluoride (PMSF). Dipeptidyl peptidase activity is inhibited by 2,2'-azino-bis(3-ethylbenzthiazoline-6-sulfonic acid), diisopropylfluorophosphate (DFP). Prolyl endopeptidase activity is inhibited by the boronic acid peptide Ac-Gly-BoroPro, Ac-Gly-Pro-chloromethyl ketone and Thr-Ser-Gly-chloromethyl ketone. Functionally, cell surface glycoprotein serine protease that participates in extracellular matrix degradation and involved in many cellular processes including tissue remodeling, fibrosis, wound healing, inflammation and tumor growth. Both plasma membrane and soluble forms exhibit post-proline cleaving endopeptidase activity, with a marked preference for Ala/Ser-Gly-Pro-Ser/Asn/Ala consensus sequences, on substrate such as alpha-2-antiplasmin SERPINF2 and SPRY2. Degrade also gelatin, heat-denatured type I collagen, but not native collagen type I and IV, vitronectin, tenascin, laminin, fibronectin, fibrin or casein. Also has dipeptidyl peptidase activity, exhibiting the ability to hydrolyze the prolyl bond two residues from the N-terminus of synthetic dipeptide substrates provided that the penultimate residue is proline, with a preference for Ala-Pro, Ile-Pro, Gly-Pro, Arg-Pro and Pro-Pro. Natural neuropeptide hormones for dipeptidyl peptidase are the neuropeptide Y (NPY), peptide YY (PYY), substance P (TAC1) and brain natriuretic peptide 32 (NPPB). The plasma membrane form, in association with either DPP4, PLAUR or integrins, is involved in the pericellular proteolysis of the extracellular matrix (ECM), and hence promotes cell adhesion, migration and invasion through the ECM. Plays a role in tissue remodeling during development and wound healing. Participates in the cell invasiveness towards the ECM in malignant melanoma cancers. Enhances tumor growth progression by increasing angiogenesis, collagen fiber degradation and apoptosis and by reducing antitumor response of the immune system. Promotes glioma cell invasion through the brain parenchyma by degrading the proteoglycan brevican. Acts as a tumor suppressor in melanocytic cells through regulation of cell proliferation and survival in a serine protease activity-independent manner. In Homo sapiens (Human), this protein is Prolyl endopeptidase FAP.